We begin with the raw amino-acid sequence, 81 residues long: Sulfur carrier protein TusA (81 aa).

The active-site Cysteine persulfide intermediate is cysteine 19.

Belongs to the sulfur carrier protein TusA family.

The protein localises to the cytoplasm. In terms of biological role, sulfur carrier protein which probably makes part of a sulfur-relay system. The chain is Sulfur carrier protein TusA from Shewanella sp. (strain MR-4).